The sequence spans 254 residues: Ribosomal RNA small subunit methyltransferase G (254 aa).

The tract at residues 84-109 is insert; sequence NTESKTSLNNAETKNTNEALLTSEPF. S-adenosyl-L-methionine contacts are provided by residues Gly-115, Phe-120, 171–172, and Arg-185; that span reads AE.

Belongs to the methyltransferase superfamily. RNA methyltransferase RsmG family.

It localises to the cytoplasm. Functionally, specifically methylates the N7 position of a guanine in 16S rRNA. The polypeptide is Ribosomal RNA small subunit methyltransferase G (Treponema denticola (strain ATCC 35405 / DSM 14222 / CIP 103919 / JCM 8153 / KCTC 15104)).